Consider the following 382-residue polypeptide: Galactokinase (382 aa).

34–37 serves as a coordination point for substrate; sequence EHTD. Residue 124 to 130 participates in ATP binding; sequence GAGLSSS. Mg(2+)-binding residues include S130 and E162. The active-site Proton acceptor is the D174. Y223 is a binding site for substrate.

It belongs to the GHMP kinase family. GalK subfamily.

Its subcellular location is the cytoplasm. The catalysed reaction is alpha-D-galactose + ATP = alpha-D-galactose 1-phosphate + ADP + H(+). It functions in the pathway carbohydrate metabolism; galactose metabolism. Catalyzes the transfer of the gamma-phosphate of ATP to D-galactose to form alpha-D-galactose-1-phosphate (Gal-1-P). This chain is Galactokinase, found in Escherichia coli O81 (strain ED1a).